The following is a 327-amino-acid chain: Zinc transport protein ZntB (327 aa).

Topologically, residues 1-271 are cytoplasmic; the sequence is METIYGSSLK…AMNRRTYTMS (271 aa). The chain crosses the membrane as a helical span at residues 272–292; it reads LLAMIFLPTTFLTGLFGVNLG. Over 293 to 300 the chain is Periplasmic; that stretch reads GIPGNEYY. Residues 301-321 form a helical membrane-spanning segment; it reads LGFAIFCLLLFGLVLFVAWWL. The Cytoplasmic segment spans residues 322–327; the sequence is KKSKWL.

The protein belongs to the CorA metal ion transporter (MIT) (TC 1.A.35) family.

It localises to the cell inner membrane. It carries out the reaction Zn(2+)(out) + H(+)(out) = Zn(2+)(in) + H(+)(in). Zinc transporter. Acts as a Zn(2+):proton symporter, which likely mediates zinc ion uptake. The sequence is that of Zinc transport protein ZntB from Photorhabdus laumondii subsp. laumondii (strain DSM 15139 / CIP 105565 / TT01) (Photorhabdus luminescens subsp. laumondii).